A 144-amino-acid chain; its full sequence is Ribonuclease H (144 aa).

The 136-residue stretch at 1 to 136 (MKIVTLFSDG…CDQMARNEAL (136 aa)) folds into the RNase H type-1 domain. Asp9, Glu47, Asp69, and Asp128 together coordinate Mg(2+).

Belongs to the RNase H family. As to quaternary structure, monomer. Requires Mg(2+) as cofactor.

Its subcellular location is the cytoplasm. The enzyme catalyses Endonucleolytic cleavage to 5'-phosphomonoester.. Endonuclease that specifically degrades the RNA of RNA-DNA hybrids. The chain is Ribonuclease H from Campylobacter concisus (strain 13826).